The sequence spans 221 residues: Adenylate kinase (221 aa).

10-15 (GAGKGT) serves as a coordination point for ATP. An NMP region spans residues 30–59 (STGDIFRQNLRDNTELGKLAKEYMDKGLLV). Residues threonine 31, arginine 36, 57 to 59 (LLV), 85 to 88 (GYPR), and glutamine 92 contribute to the AMP site. The tract at residues 126 to 163 (GRRVCPVCGATYHIKTSPPKVDNVCDKCGSELIQRSDD) is LID. Arginine 127 provides a ligand contact to ATP. Zn(2+) is bound by residues cysteine 130 and cysteine 133. 136–137 (TY) lines the ATP pocket. Zn(2+) contacts are provided by cysteine 150 and cysteine 153. Positions 160 and 171 each coordinate AMP. Lysine 199 is an ATP binding site.

This sequence belongs to the adenylate kinase family. Monomer.

It is found in the cytoplasm. The enzyme catalyses AMP + ATP = 2 ADP. Its pathway is purine metabolism; AMP biosynthesis via salvage pathway; AMP from ADP: step 1/1. Functionally, catalyzes the reversible transfer of the terminal phosphate group between ATP and AMP. Plays an important role in cellular energy homeostasis and in adenine nucleotide metabolism. This is Adenylate kinase from Caldanaerobacter subterraneus subsp. tengcongensis (strain DSM 15242 / JCM 11007 / NBRC 100824 / MB4) (Thermoanaerobacter tengcongensis).